The following is a 195-amino-acid chain: Thymidine kinase (195 aa).

ATP-binding positions include 9 to 16 (ATMNAGKS) and 89 to 92 (DEAQ). Glu-90 serves as the catalytic Proton acceptor. Zn(2+)-binding residues include Cys-147, Cys-149, Cys-184, and His-187.

The protein belongs to the thymidine kinase family. As to quaternary structure, homotetramer.

The protein resides in the cytoplasm. It catalyses the reaction thymidine + ATP = dTMP + ADP + H(+). This is Thymidine kinase from Rhizobium meliloti (strain 1021) (Ensifer meliloti).